The chain runs to 167 residues: Probable membrane-bound hydrogenase subunit mbhJ (167 aa).

The [4Fe-4S] cluster site is built by Cys35, Cys38, Cys102, and Cys132.

Belongs to the complex I 20 kDa subunit family. In terms of assembly, the membrane-bound hydrogenase complex is composed of MbhK and MbhL, but may also contain MbhJ. The cofactor is [4Fe-4S] cluster.

It is found in the cell membrane. It carries out the reaction H2 + 2 oxidized [2Fe-2S]-[ferredoxin] = 2 reduced [2Fe-2S]-[ferredoxin] + 2 H(+). Inhibited by 0.1 mM Cu(2+). Probable subunit of a hydrogen-evolving hydrogenase that utilizes protons both as a substrate for hydrogen production and proton translocation. Acts by coupling the redox reaction via ferredoxin and iron-sulfur (Fe-S) clusters to proton translocation across the membrane, thereby conserving the redox energy in a proton gradient. In Pyrococcus furiosus (strain ATCC 43587 / DSM 3638 / JCM 8422 / Vc1), this protein is Probable membrane-bound hydrogenase subunit mbhJ.